A 395-amino-acid chain; its full sequence is Flagellin D (395 aa).

Belongs to the bacterial flagellin family.

The protein localises to the secreted. It is found in the bacterial flagellum. Flagellin is the subunit protein which polymerizes to form the filaments of bacterial flagella. This chain is Flagellin D (flaD), found in Rhizobium meliloti (Ensifer meliloti).